The primary structure comprises 183 residues: Ribosome rescue factor SmrB (183 aa).

The 76-residue stretch at 98-173 (LDLHGLTQLQ…GDAALLVLIE (76 aa)) folds into the Smr domain.

Belongs to the SmrB family. Associates with collided ribosomes, but not with correctly translating polysomes.

In terms of biological role, acts as a ribosome collision sensor. Detects stalled/collided disomes (pairs of ribosomes where the leading ribosome is stalled and a second ribosome has collided with it) and endonucleolytically cleaves mRNA at the 5' boundary of the stalled ribosome. Stalled/collided disomes form a new interface (primarily via the 30S subunits) that binds SmrB. Cleaved mRNA becomes available for tmRNA ligation, leading to ribosomal subunit dissociation and rescue of stalled ribosomes. In Shigella dysenteriae serotype 1 (strain Sd197), this protein is Ribosome rescue factor SmrB.